The sequence spans 659 residues: Exoribonuclease 2 (659 aa).

The RNB domain maps to 189 to 531; the sequence is RKDLTALHFV…NHRLIKACIA (343 aa). An S1 motif domain is found at 576–658; the sequence is KPEFQAEVQD…ETRSLIGNLV (83 aa).

This sequence belongs to the RNR ribonuclease family. RNase II subfamily.

It localises to the cytoplasm. It carries out the reaction Exonucleolytic cleavage in the 3'- to 5'-direction to yield nucleoside 5'-phosphates.. Its function is as follows. Involved in mRNA degradation. Hydrolyzes single-stranded polyribonucleotides processively in the 3' to 5' direction. The chain is Exoribonuclease 2 from Actinobacillus succinogenes (strain ATCC 55618 / DSM 22257 / CCUG 43843 / 130Z).